A 258-amino-acid chain; its full sequence is MSSATQSARFSPSPISVEHLGTIGYVDAWDRQRELAAERAENLGADTLLLLEHPAVYTAGRRTEPEDRPTDGTPVIDVDRGGKITWHGPGQLVGYPIVKLAEPVDVVRYVRRLEQALISVCTDLGIDCGRVDGRSGVWLPASLDNGQWLPERKVAAIGVRVQRGVALHGFSLNCNSVLTGFDAIIPCGIRDAGVTSLSRELGRDVTVEEVTPAVTAAVVAALDGALPVTDHDIERVTFDSATAEKTAAAPTFTTVQYG.

In terms of domain architecture, BPL/LPL catalytic spans 42–226 (NLGADTLLLL…AVVAALDGAL (185 aa)). Substrate is bound by residues 80-87 (RGGKITWH), 156-158 (AIG), and 169-171 (GFS). Residue Cys187 is the Acyl-thioester intermediate of the active site.

This sequence belongs to the LipB family.

The protein localises to the cytoplasm. It catalyses the reaction octanoyl-[ACP] + L-lysyl-[protein] = N(6)-octanoyl-L-lysyl-[protein] + holo-[ACP] + H(+). It functions in the pathway protein modification; protein lipoylation via endogenous pathway; protein N(6)-(lipoyl)lysine from octanoyl-[acyl-carrier-protein]: step 1/2. Functionally, catalyzes the transfer of endogenously produced octanoic acid from octanoyl-acyl-carrier-protein onto the lipoyl domains of lipoate-dependent enzymes. Lipoyl-ACP can also act as a substrate although octanoyl-ACP is likely to be the physiological substrate. The protein is Octanoyltransferase of Rhodococcus opacus (strain B4).